We begin with the raw amino-acid sequence, 255 residues long: F-box/SPRY domain-containing protein 1 (255 aa).

Residues 3–51 (DPVAALCNYNVLEVIFSYLELDDLSHCSQVCKSWNLFLNDENSDVWRWH) form the F-box domain. One can recognise a B30.2/SPRY domain in the interval 61 to 253 (LKSDLLSSVS…VSMVYLGTPM (193 aa)).

Belongs to the FBXO45/Fsn family. In terms of assembly, component of an E3 ubiquitin ligase complex composed of hiw and Fsn.

It localises to the synapse. It participates in protein modification; protein ubiquitination. Its function is as follows. Required in the presynaptic motoneuron to down-regulate the levels of wnd and restrain synaptic terminal growth at the neuromuscular junction (NMJ). The protein is F-box/SPRY domain-containing protein 1 of Drosophila ananassae (Fruit fly).